A 182-amino-acid polypeptide reads, in one-letter code: Protein GrpE (182 aa).

This sequence belongs to the GrpE family. In terms of assembly, homodimer.

Its subcellular location is the cytoplasm. Participates actively in the response to hyperosmotic and heat shock by preventing the aggregation of stress-denatured proteins, in association with DnaK and GrpE. It is the nucleotide exchange factor for DnaK and may function as a thermosensor. Unfolded proteins bind initially to DnaJ; upon interaction with the DnaJ-bound protein, DnaK hydrolyzes its bound ATP, resulting in the formation of a stable complex. GrpE releases ADP from DnaK; ATP binding to DnaK triggers the release of the substrate protein, thus completing the reaction cycle. Several rounds of ATP-dependent interactions between DnaJ, DnaK and GrpE are required for fully efficient folding. This is Protein GrpE from Aquifex aeolicus (strain VF5).